Consider the following 95-residue polypeptide: Aspartyl/glutamyl-tRNA(Asn/Gln) amidotransferase subunit C (95 aa).

This sequence belongs to the GatC family. As to quaternary structure, heterotrimer of A, B and C subunits.

The enzyme catalyses L-glutamyl-tRNA(Gln) + L-glutamine + ATP + H2O = L-glutaminyl-tRNA(Gln) + L-glutamate + ADP + phosphate + H(+). It catalyses the reaction L-aspartyl-tRNA(Asn) + L-glutamine + ATP + H2O = L-asparaginyl-tRNA(Asn) + L-glutamate + ADP + phosphate + 2 H(+). Its function is as follows. Allows the formation of correctly charged Asn-tRNA(Asn) or Gln-tRNA(Gln) through the transamidation of misacylated Asp-tRNA(Asn) or Glu-tRNA(Gln) in organisms which lack either or both of asparaginyl-tRNA or glutaminyl-tRNA synthetases. The reaction takes place in the presence of glutamine and ATP through an activated phospho-Asp-tRNA(Asn) or phospho-Glu-tRNA(Gln). In Halothermothrix orenii (strain H 168 / OCM 544 / DSM 9562), this protein is Aspartyl/glutamyl-tRNA(Asn/Gln) amidotransferase subunit C.